A 647-amino-acid polypeptide reads, in one-letter code: Protein cueball (647 aa).

A signal peptide spans 1-22 (MLWCPSVLVPLIAVAACLPVLA). Over 23–534 (IGTPLEWEFA…CMTPSPWTSN (512 aa)) the chain is Extracellular. Residues Asn80 and Asn106 are each glycosylated (N-linked (GlcNAc...) asparagine). LDL-receptor class B repeat units follow at residues 119–166 (RNLF…DVCR), 167–211 (RKLY…DQLS), and 212–257 (DRIF…TNDA). Residue Asn175 is glycosylated (N-linked (GlcNAc...) asparagine). Asn316 is a glycosylation site (N-linked (GlcNAc...) asparagine). 2 EGF-like domains span residues 365–401 (DEKT…SRCE) and 436–473 (EISK…ERCE). Intrachain disulfides connect Cys376–Cys389, Cys391–Cys400, Cys440–Cys450, Cys444–Cys461, and Cys463–Cys472. An N-linked (GlcNAc...) asparagine glycan is attached at Asn475. The helical transmembrane segment at 535–555 (VIIVLVLGIVSCFFLVAVIVH) threads the bilayer. Topologically, residues 556–647 (GFRRLYKPKR…LIHNMDDDLY (92 aa)) are cytoplasmic.

It belongs to the cueball family.

The protein resides in the cell membrane. Its function is as follows. Has a role in spermatogenesis and oogenesis. The sequence is that of Protein cueball from Drosophila pseudoobscura pseudoobscura (Fruit fly).